The following is a 1447-amino-acid chain: ATP-dependent helicase SGS1 (1447 aa).

5 disordered regions span residues 37–78 (IANK…TATK), 243–264 (KKDG…QDDN), 342–430 (KEGA…EEKE), 552–572 (KENE…LSDS), and 601–639 (TERK…FDDD). Positions 59–78 (GTTNFITSIPASGPTNTATK) are enriched in polar residues. Residues 243–253 (KKDGMSKDQSK) are compositionally biased toward basic and acidic residues. The span at 254–264 (GRSQVSSQDDN) shows a compositional bias: polar residues. Positions 363–386 (ELTRRRNMRSREPVNYRIPDRDDP) are enriched in basic and acidic residues. Acidic residues-rich tracts occupy residues 403–415 (EREE…EAED) and 552–561 (KENEDFEEDN). The segment covering 601-611 (TERKLTGDNEH) has biased composition (basic and acidic residues). A Helicase ATP-binding domain is found at 687-864 (VNATLQGKDV…IHNLELKEPV (178 aa)). Residue 714 to 721 (AVVKSGKT) coordinates ATP. The DEAH box motif lies at 808-811 (DEAH). Positions 886 to 1035 (TIFEICDAVK…NKEKHLNKLQ (150 aa)) constitute a Helicase C-terminal domain. Residues 1272–1351 (LNNLRMTYER…ADLSKKRSSE (80 aa)) form the HRDC domain. Positions 1402–1411 (QIRQSQLPKN) are enriched in polar residues. Positions 1402-1447 (QIRQSQLPKNTTSSKSGTRSISKSSKKSANGRRGFRNYRGHYRGRK) are disordered. The span at 1412-1424 (TTSSKSGTRSISK) shows a compositional bias: low complexity. Residues 1425–1447 (SSKKSANGRRGFRNYRGHYRGRK) show a composition bias toward basic residues.

Belongs to the helicase family. RecQ subfamily. As to quaternary structure, heterodimer with TOP3. Forms a complex with TOP3 and RMI1. Forms a ternary complex with a MLH1-MLH3 heterodimer (MutLbeta) during meiosis. Interacts with TOP2. It depends on Mg(2+) as a cofactor.

It is found in the nucleus. Its subcellular location is the nucleolus. The catalysed reaction is Couples ATP hydrolysis with the unwinding of duplex DNA by translocating in the 3'-5' direction.. It carries out the reaction ATP + H2O = ADP + phosphate + H(+). Its activity is regulated as follows. Helicase activity on G-quadruplex DNA is inhibited by ATP-gamma-S. Functionally, ATP-dependent 3'-5' DNA helicase able to unwind duplex DNA or DNA:RNA heteroduplex. Unwinds G-quadruplex DNA; unwinding occurs in the 3'-5' direction, requires a 3' single-stranded end of at least 7 nucleotides. Helicase activity is higher on G-quadruplex substrates than on duplex DNA substrates. Assayed with a catalytic fragment (residues 400-1268). Telomeres and rDNA are notably G-rich; formation of G-quadruplex DNA would block DNA replication and transcription. Acts as an integral component of the S-phase checkpoint response, which arrests cells due to DNA damage or blocked fork progression during DNA replication. Can create a deleterious topological substrate that TOP3 preferentially resolves. The TOP3-SGS1 protein complex may function as a eukaryotic reverse gyrase introducing positive supercoils into extrachromosomal ribosomal DNA rings. Together with topoisomerase II has a role in chromosomal segregation. Maintains rDNA structure where it has a role in re-starting stalled replication forks. This chain is ATP-dependent helicase SGS1, found in Saccharomyces cerevisiae (strain ATCC 204508 / S288c) (Baker's yeast).